The primary structure comprises 368 residues: D-alanine--D-alanine ligase (368 aa).

Positions 151–358 constitute an ATP-grasp domain; it reads KKLLAAEGLP…YRTLISTLVD (208 aa). 179–234 contacts ATP; sequence KAELGLPVFVKPARGGSSIGITRVSNWDGLDGAIAHARLHDPKVIVEGAIIGREVE. Positions 313, 325, and 327 each coordinate Mg(2+).

The protein belongs to the D-alanine--D-alanine ligase family. Mg(2+) is required as a cofactor. The cofactor is Mn(2+).

The protein resides in the cytoplasm. It carries out the reaction 2 D-alanine + ATP = D-alanyl-D-alanine + ADP + phosphate + H(+). Its pathway is cell wall biogenesis; peptidoglycan biosynthesis. Functionally, cell wall formation. This is D-alanine--D-alanine ligase from Rhodococcus erythropolis (strain PR4 / NBRC 100887).